The sequence spans 268 residues: UPF0328 protein ECU10_1850 (268 aa).

The protein belongs to the UPF0328 family.

In Encephalitozoon cuniculi (strain GB-M1) (Microsporidian parasite), this protein is UPF0328 protein ECU10_1850.